A 135-amino-acid chain; its full sequence is S-protein homolog 20 (135 aa).

A signal peptide spans 1–26 (MNGSSAFHIILSVTFMVFLFGGLCEA). Residue asparagine 88 is glycosylated (N-linked (GlcNAc...) asparagine).

This sequence belongs to the plant self-incompatibility (S1) protein family.

The protein localises to the secreted. The sequence is that of S-protein homolog 20 from Arabidopsis thaliana (Mouse-ear cress).